A 72-amino-acid chain; its full sequence is Translation initiation factor IF-1 (72 aa).

Residues 1–72 enclose the S1-like domain; the sequence is MAKEETIQMQ…TRARITFRTK (72 aa).

It belongs to the IF-1 family. Component of the 30S ribosomal translation pre-initiation complex which assembles on the 30S ribosome in the order IF-2 and IF-3, IF-1 and N-formylmethionyl-tRNA(fMet); mRNA recruitment can occur at any time during PIC assembly.

It localises to the cytoplasm. One of the essential components for the initiation of protein synthesis. Stabilizes the binding of IF-2 and IF-3 on the 30S subunit to which N-formylmethionyl-tRNA(fMet) subsequently binds. Helps modulate mRNA selection, yielding the 30S pre-initiation complex (PIC). Upon addition of the 50S ribosomal subunit IF-1, IF-2 and IF-3 are released leaving the mature 70S translation initiation complex. The protein is Translation initiation factor IF-1 of Nitrosomonas eutropha (strain DSM 101675 / C91 / Nm57).